The chain runs to 129 residues: Transcription factor bHLH138 (129 aa).

Residues 1–18 (MERYTKKNERFKAEEGKG) are compositionally biased toward basic and acidic residues. Residues 1-24 (MERYTKKNERFKAEEGKGSKKSRT) are disordered. Positions 19–68 (SKKSRTFLTERERRALFNDRFFDLKNLIPNPTKGGEASIVQDGIVYINEL) constitute a bHLH domain.

The protein belongs to the bHLH protein family.

The protein resides in the nucleus. This is Transcription factor bHLH138 from Arabidopsis thaliana (Mouse-ear cress).